Reading from the N-terminus, the 384-residue chain is 5-amino-6-(D-ribitylamino)uracil--L-tyrosine 4-hydroxyphenyl transferase 2 (384 aa).

The region spanning 53–286 (VSYVVNRNIY…IAISRVILHT (234 aa)) is the Radical SAM core domain. Residues Cys67, Cys71, and Cys74 each contribute to the [4Fe-4S] cluster site.

The protein belongs to the radical SAM superfamily. CofH family. As to quaternary structure, consists of two subunits, CofG and CofH. Requires [4Fe-4S] cluster as cofactor.

The enzyme catalyses 5-amino-6-(D-ribitylamino)uracil + L-tyrosine + S-adenosyl-L-methionine = 5-amino-5-(4-hydroxybenzyl)-6-(D-ribitylimino)-5,6-dihydrouracil + 2-iminoacetate + 5'-deoxyadenosine + L-methionine + H(+). The protein operates within cofactor biosynthesis; coenzyme F0 biosynthesis. Its function is as follows. Catalyzes the radical-mediated synthesis of 5-amino-5-(4-hydroxybenzyl)-6-(D-ribitylimino)-5,6-dihydrouracil from 5-amino-6-(D-ribitylamino)uracil and L-tyrosine. In Methanosarcina barkeri (strain Fusaro / DSM 804), this protein is 5-amino-6-(D-ribitylamino)uracil--L-tyrosine 4-hydroxyphenyl transferase 2.